A 234-amino-acid polypeptide reads, in one-letter code: Segregation and condensation protein A (234 aa).

The protein belongs to the ScpA family. As to quaternary structure, component of a cohesin-like complex composed of ScpA, ScpB and the Smc homodimer, in which ScpA and ScpB bind to the head domain of Smc. The presence of the three proteins is required for the association of the complex with DNA.

The protein resides in the cytoplasm. Functionally, participates in chromosomal partition during cell division. May act via the formation of a condensin-like complex containing Smc and ScpB that pull DNA away from mid-cell into both cell halves. The polypeptide is Segregation and condensation protein A (Streptococcus pyogenes serotype M3 (strain ATCC BAA-595 / MGAS315)).